We begin with the raw amino-acid sequence, 234 residues long: uncharacterized protein (234 aa).

An ABC transporter domain is found at 5 to 234 (MELVDVWKIY…ERRGVVYGDT (230 aa)). 41-48 (GPSGSGKS) serves as a coordination point for ATP.

The protein belongs to the ABC transporter superfamily.

This is an uncharacterized protein from Thermotoga maritima (strain ATCC 43589 / DSM 3109 / JCM 10099 / NBRC 100826 / MSB8).